A 271-amino-acid polypeptide reads, in one-letter code: Potential ATP-binding protein (271 aa).

G34 to T41 provides a ligand contact to ATP.

The chain is Potential ATP-binding protein from Staphylococcus aureus.